Consider the following 138-residue polypeptide: Phosphoribosyl-AMP cyclohydrolase (138 aa).

Position 84 (D84) interacts with Mg(2+). C85 contacts Zn(2+). D86 and D88 together coordinate Mg(2+). Zn(2+) is bound by residues C102 and C109.

This sequence belongs to the PRA-CH family. In terms of assembly, homodimer. It depends on Mg(2+) as a cofactor. The cofactor is Zn(2+).

The protein resides in the cytoplasm. It carries out the reaction 1-(5-phospho-beta-D-ribosyl)-5'-AMP + H2O = 1-(5-phospho-beta-D-ribosyl)-5-[(5-phospho-beta-D-ribosylamino)methylideneamino]imidazole-4-carboxamide. It participates in amino-acid biosynthesis; L-histidine biosynthesis; L-histidine from 5-phospho-alpha-D-ribose 1-diphosphate: step 3/9. Functionally, catalyzes the hydrolysis of the adenine ring of phosphoribosyl-AMP. This chain is Phosphoribosyl-AMP cyclohydrolase, found in Burkholderia ambifaria (strain ATCC BAA-244 / DSM 16087 / CCUG 44356 / LMG 19182 / AMMD) (Burkholderia cepacia (strain AMMD)).